The primary structure comprises 187 residues: Ribosome-recycling factor (187 aa).

It belongs to the RRF family.

It localises to the cytoplasm. In terms of biological role, responsible for the release of ribosomes from messenger RNA at the termination of protein biosynthesis. May increase the efficiency of translation by recycling ribosomes from one round of translation to another. This chain is Ribosome-recycling factor, found in Paracoccus denitrificans (strain Pd 1222).